A 377-amino-acid chain; its full sequence is Nitric oxide reductase FlRd-NAD(+) reductase (377 aa).

The protein belongs to the FAD-dependent oxidoreductase family. FAD serves as cofactor.

It localises to the cytoplasm. It catalyses the reaction 2 reduced [nitric oxide reductase rubredoxin domain] + NAD(+) + H(+) = 2 oxidized [nitric oxide reductase rubredoxin domain] + NADH. It functions in the pathway nitrogen metabolism; nitric oxide reduction. One of at least two accessory proteins for anaerobic nitric oxide (NO) reductase. Reduces the rubredoxin moiety of NO reductase. The sequence is that of Nitric oxide reductase FlRd-NAD(+) reductase from Salmonella heidelberg (strain SL476).